The following is a 230-amino-acid chain: Sugar fermentation stimulation protein homolog (230 aa).

The protein belongs to the SfsA family.

This is Sugar fermentation stimulation protein homolog from Clostridium botulinum (strain Okra / Type B1).